The following is a 268-amino-acid chain: Tryptophan synthase alpha chain (268 aa).

Catalysis depends on proton acceptor residues glutamate 49 and aspartate 60.

It belongs to the TrpA family. As to quaternary structure, tetramer of two alpha and two beta chains.

The catalysed reaction is (1S,2R)-1-C-(indol-3-yl)glycerol 3-phosphate + L-serine = D-glyceraldehyde 3-phosphate + L-tryptophan + H2O. It participates in amino-acid biosynthesis; L-tryptophan biosynthesis; L-tryptophan from chorismate: step 5/5. The alpha subunit is responsible for the aldol cleavage of indoleglycerol phosphate to indole and glyceraldehyde 3-phosphate. The sequence is that of Tryptophan synthase alpha chain from Aliivibrio fischeri (strain MJ11) (Vibrio fischeri).